Here is a 244-residue protein sequence, read N- to C-terminus: DNA repair protein RecO (244 aa).

It belongs to the RecO family.

In terms of biological role, involved in DNA repair and RecF pathway recombination. The protein is DNA repair protein RecO of Polynucleobacter necessarius subsp. necessarius (strain STIR1).